The primary structure comprises 712 residues: TIR domain-containing adapter molecule 1 (712 aa).

Residues 1 to 153 (MACTGPSLPS…CGWDIAGDPG (153 aa)) form a TRIF-NTD region. The TRAF6-binding motif lies at 84 to 91 (EDPEEPPD). Positions 207 to 210 (LEIS) match the pLxIS motif motif. Serine 210 is modified (phosphoserine; by TBK1). 2 disordered regions span residues 216–316 (PFLS…SLPL) and 336–384 (LSVE…LFPS). Lysine 229 is covalently cross-linked (Glycyl lysine isopeptide (Lys-Gly) (interchain with G-Cter in ubiquitin)). Positions 248–255 (QEPEEMSW) match the TRAF6-binding motif. Residues 265 to 275 (PELPSSPPPGL) are compositionally biased toward pro residues. The TRAF6-binding signature appears at 299-309 (NYPVECTEGSA). Residues 347–369 (KPCPPTPTTPETSPPPPPPPPSS) show a composition bias toward pro residues. One can recognise a TIR domain in the interval 393-553 (KFYNFVILHA…QDTRALREQS (161 aa)). A sufficient to induce apoptosis region spans residues 512 to 712 (RLDEHSQIFA…APEDKTQEAE (201 aa)). 2 stretches are compositionally biased toward pro residues: residues 620–633 (PFPT…PPPL) and 640–649 (TPPPPSPQPA). The interval 620 to 677 (PFPTWPGCPQPPPLHAWQAGTPPPPSPQPAAFPQSLPFPQSPAFPTASPAPPQSPGLQ) is disordered. Residues 650–666 (AFPQSLPFPQSPAFPTA) show a composition bias toward low complexity.

Homodimer. Found in a multi-helicase-TICAM1 complex at least composed of DHX36, DDX1, DDX21 and TICAM1; this complex exists in resting cells with or without poly(I:C) RNA ligand stimulation. Interacts (via TIR domain) with DDX21 (via C-terminus). Interacts (via TIR domain) with DHX36 (via C-terminus). Interacts with AZI2 and IRF7. Interacts with TICAM2 in TLR4 recruitment. Interaction with PIAS4 inhibits the TICAM1-induced NF-kappa-B, IRF and IFNB1 activation. Interacts with IKBKB and IKBKE. Interaction with SARM1 blocks TICAM1-dependent transcription factor activation. Interacts with TRAF3. Interacts (when phosphorylated) with IRF3; following activation and phosphorylation on the pLxIS motif by TBK1, recruits IRF3. Interacts with TBK1, TRAF6 and RIPK1 and these interactions are enhanced in the presence of WDFY1. Interacts with TRAFD1. Interacts with UBQLN1 (via UBA domain). Interacts with TLR4. Interacts with WDFY1 in response to poly(I:C). Interacts (via the TIR domain) with TLR3 in response to poly(I:C) and this interaction is enhanced in the presence of WDFY1. Interacts with TRIM56. Component of a multi-helicase-TICAM1 complex that acts as a cytoplasmic sensor of viral double-stranded RNA (dsRNA) and plays a role in the activation of a cascade of antiviral responses including the induction of pro-inflammatory cytokines. Interacts (via the TIR domain) with TLR5. Interacts with TRIM8. Interacts with TAX1BP1 and TRIM32; these interactions target TICAM1 to TAX1BP1-mediated selective autophagic degradation. Interacts with DDX50. In terms of assembly, (Microbial infection) Interacts with hepatitis C virus (HCV) NS3/4A protease; this interaction leads to TICAM1 cleavage, thereby disrupting TLR3 signaling and preventing the establishment of an antiviral state. As to quaternary structure, (Microbial infection) Interacts with Seneca Valley virus protease 3C; this interaction allows the cleavage of TICAM1/TRIF and subsequent suppression of host innate immunity. (Microbial infection) Interacts (via C-terminus) with coxsackievirus B3 (CVB3) protease 3C. In terms of processing, phosphorylated by TBK1. Following activation, phosphorylated by TBK1 at Ser-210 in the pLxIS motif. The phosphorylated pLxIS motif constitutes an IRF3-binding motif, leading to recruitment of the transcription factor IRF3 to induce type-I interferons and other cytokines. Polyubiquitinated at Lys-229 by TRIM38 with 'Lys-48'-linked chains, leading to proteasomal degradation. Polyubiquitinated with 'Lys-6'- and 'Lys-33'-linked chains in a TRIM8-dependent manner; ubiquitination disrupts the interaction with TBK1 and subsequent interferon production. Post-translationally, (Microbial infection) Cleaved and degraded by hepatitis A virus (HAV) protein 3CD allowing the virus to disrupt host TLR3 signaling. In terms of processing, (Microbial infection) Cleaved by CVB3 protease 3C allowing the virus to disrupt host TLR3 signaling. (Microbial infection) Cleaved by Seneca Valley virus protease 3C allowing the virus to disrupt host TLR3 signaling. Post-translationally, (Microbial infection) Cleaved by protease 3C of human enterovirus D68 (EV68) allowing the virus to disrupt host TLR3 signaling. In terms of processing, (Microbial infection) Cleaved by HCV protease NS3/4A, thereby disrupting TLR3 signaling and preventing the establishment of an antiviral state. Ubiquitously expressed but with higher levels in liver.

The protein localises to the cytoplasmic vesicle. Its subcellular location is the autophagosome. The protein resides in the cytoplasm. It is found in the cytosol. It localises to the mitochondrion. In terms of biological role, involved in innate immunity against invading pathogens. Adapter used by TLR3, TLR4 (through TICAM2) and TLR5 to mediate NF-kappa-B and interferon-regulatory factor (IRF) activation, and to induce apoptosis. Ligand binding to these receptors results in TRIF recruitment through its TIR domain. Distinct protein-interaction motifs allow recruitment of the effector proteins TBK1, TRAF6 and RIPK1, which in turn, lead to the activation of transcription factors IRF3 and IRF7, NF-kappa-B and FADD respectively. Phosphorylation by TBK1 on the pLxIS motif leads to recruitment and subsequent activation of the transcription factor IRF3 to induce expression of type I interferon and exert a potent immunity against invading pathogens. Component of a multi-helicase-TICAM1 complex that acts as a cytoplasmic sensor of viral double-stranded RNA (dsRNA) and plays a role in the activation of a cascade of antiviral responses including the induction of pro-inflammatory cytokines. The chain is TIR domain-containing adapter molecule 1 (TICAM1) from Homo sapiens (Human).